A 101-amino-acid chain; its full sequence is Small integral membrane protein 21 (101 aa).

The chain crosses the membrane as a helical span at residues 49–65 (HIRFFTLLVLFHVMVLL).

It localises to the membrane. In Homo sapiens (Human), this protein is Small integral membrane protein 21 (SMIM21).